Consider the following 95-residue polypeptide: RING finger protein Z (95 aa).

Gly2 is lipidated: N-myristoyl glycine; by host. Residues 38-74 (CKSCWFANKGLLKCSNHYLCLKCLTLMLRRSDYCGIC) form an RING-type; atypical zinc finger. The PTAP/PSAP motif motif lies at 88–91 (PSAP).

It belongs to the arenaviridae Z protein family. Interacts with protein NP; this interaction probably directs the encapsidated genome to budding sites. Interacts (via RING domain) with polymerase L; this interaction inhibits viral transcription and replication, Z partially blocks the product exit tunnel for the releasing nascent RNA product. Interacts with the glycoprotein complex; this interaction plays a role in virion budding. Interacts with host eIF4E; this interaction results in eIF4E reduced affinity for its substrate, the 5'-m7 G cap structure. Interacts (via late-budding domain) with host TSG101; this interaction is essential for budding and release of viral particles. Interacts with host RPLP0; this interaction may serve to load ribosome-like particles inside the virion. Interacts with host PML; this interaction induces PML bodies redistribution in the cytoplasm upon viral infection. Myristoylation is required for the role of RING finger protein Z in assembly and budding.

The protein localises to the virion. It is found in the host cytoplasm. It localises to the host perinuclear region. Its subcellular location is the host cell membrane. Its function is as follows. Plays a crucial role in virion assembly and budding. Expressed late in the virus life cycle, it acts as an inhibitor of viral transcription and RNA synthesis by interacting with the viral polymerase L. Presumably recruits the NP encapsidated genome to cellular membranes at budding sites via direct interaction with NP. Plays critical roles in the final steps of viral release by interacting with host TSG101, a member of the vacuolar protein-sorting pathway and using other cellular host proteins involved in vesicle formation pathway. The budding of the virus progeny occurs after association of protein Z with the viral glycoprotein complex SSP-GP1-GP2 at the cell periphery, step that requires myristoylation of protein Z. Also selectively represses protein production by associating with host eIF4E. In cell-based minigenome assay, has an inhibitory effect on the ribonucleoprotein machinery (vRNP), which is responsible for the replication and transcription of the viral genome. The protein is RING finger protein Z of Neotoma (wood rats).